Here is a 102-residue protein sequence, read N- to C-terminus: Small ribosomal subunit protein uS10 (102 aa).

This sequence belongs to the universal ribosomal protein uS10 family. Part of the 30S ribosomal subunit.

Functionally, involved in the binding of tRNA to the ribosomes. The protein is Small ribosomal subunit protein uS10 of Cupriavidus metallidurans (strain ATCC 43123 / DSM 2839 / NBRC 102507 / CH34) (Ralstonia metallidurans).